We begin with the raw amino-acid sequence, 603 residues long: Terpenoid synthase 25 (603 aa).

Residues Asp356, Asp360, Asn500, Thr504, and Glu508 each contribute to the Mg(2+) site. Positions 356-360 match the DDXXD motif motif; it reads DDTCD.

Belongs to the terpene synthase family. Tpsa subfamily. Requires Mg(2+) as cofactor. The cofactor is Mn(2+). As to expression, predominantly expressed in roots but also in flowers.

It is found in the cytoplasm. Its pathway is secondary metabolite biosynthesis; terpenoid biosynthesis. Involved in terpene biosynthesis in roots. Possesses sesquiterpene (C15) synthase activity in vitro. Does not seem to be involved in diterpene (C20) biosynthesis. The protein is Terpenoid synthase 25 of Arabidopsis thaliana (Mouse-ear cress).